The primary structure comprises 181 residues: ATP synthase subunit b (181 aa).

A helical membrane pass occupies residues 24–44 (LFPNLPNFIAHLLATIILVIV).

Belongs to the ATPase B chain family. F-type ATPases have 2 components, F(1) - the catalytic core - and F(0) - the membrane proton channel. F(1) has five subunits: alpha(3), beta(3), gamma(1), delta(1), epsilon(1). F(0) has three main subunits: a(1), b(2) and c(10-14). The alpha and beta chains form an alternating ring which encloses part of the gamma chain. F(1) is attached to F(0) by a central stalk formed by the gamma and epsilon chains, while a peripheral stalk is formed by the delta and b chains.

The protein localises to the cell membrane. In terms of biological role, f(1)F(0) ATP synthase produces ATP from ADP in the presence of a proton or sodium gradient. F-type ATPases consist of two structural domains, F(1) containing the extramembraneous catalytic core and F(0) containing the membrane proton channel, linked together by a central stalk and a peripheral stalk. During catalysis, ATP synthesis in the catalytic domain of F(1) is coupled via a rotary mechanism of the central stalk subunits to proton translocation. Functionally, component of the F(0) channel, it forms part of the peripheral stalk, linking F(1) to F(0). The polypeptide is ATP synthase subunit b (Mycoplasma mycoides subsp. mycoides SC (strain CCUG 32753 / NCTC 10114 / PG1)).